The primary structure comprises 476 residues: Argininosuccinate lyase (476 aa).

This sequence belongs to the lyase 1 family. Argininosuccinate lyase subfamily.

It localises to the cytoplasm. It catalyses the reaction 2-(N(omega)-L-arginino)succinate = fumarate + L-arginine. The protein operates within amino-acid biosynthesis; L-arginine biosynthesis; L-arginine from L-ornithine and carbamoyl phosphate: step 3/3. This chain is Argininosuccinate lyase, found in Thermobifida fusca (strain YX).